The following is a 945-amino-acid chain: Nonsense-mediated mRNA decay factor SMG8 (945 aa).

2 disordered regions span residues 563–604 (RAEP…SANE) and 633–671 (AEAE…ERSA).

Belongs to the SMG8 family.

Functionally, involved in nonsense-mediated decay (NMD) of mRNAs containing premature stop codons. Probable component of kinase complex containing nonC and recruited to stalled ribosomes. The polypeptide is Nonsense-mediated mRNA decay factor SMG8 (Drosophila grimshawi (Hawaiian fruit fly)).